Reading from the N-terminus, the 526-residue chain is 4-alpha-glucanotransferase (526 aa).

This sequence belongs to the disproportionating enzyme family.

The protein localises to the cytoplasm. It carries out the reaction Transfers a segment of a (1-&gt;4)-alpha-D-glucan to a new position in an acceptor, which may be glucose or a (1-&gt;4)-alpha-D-glucan.. The polypeptide is 4-alpha-glucanotransferase (malQ) (Chlamydia pneumoniae (Chlamydophila pneumoniae)).